Consider the following 351-residue polypeptide: MKFSIGVSLLATLAGAVNVDMAKRDTSPLNVKLEALGNSGVKAVLTNTGDSDIKLFKTGTFLDKSPVEKVEVFAAGSKIDFDGVRLQISTTGLTEEAFQIVAAGETFEVEFDAAELHDLSKGGAVDIVTQGSFLYADVDSTEIAGTIPFSSNSVHTEINGDEAASVRAAFLAKRTIVQSDCTGTRRTATVNAISRCRALAAAASQAAASGPVARMTEYFKSSTTATRNSVATVFRNIVSECGSTTSGVSRQYCTDVYGACSNGVIAYTVPAQNYMVNCPYFFNNMAAASSTCHAQDQQTTILHEMTHLRQIKGTSDYGGYGYNFVRSLSAAQNLNHADTYTLFAQSIYAGC.

Residues 1–16 (MKFSIGVSLLATLAGA) form the signal peptide. Residues 17 to 177 (VNVDMAKRDT…AAFLAKRTIV (161 aa)) constitute a propeptide that is removed on maturation. Cystine bridges form between Cys181–Cys253 and Cys260–Cys278. Residue His303 coordinates Zn(2+). The active site involves Glu304. His307 contributes to the Zn(2+) binding site.

It belongs to the peptidase M35 family. Zn(2+) serves as cofactor.

It is found in the secreted. The catalysed reaction is Preferential cleavage of bonds with hydrophobic residues in P1'. Also 3-Asn-|-Gln-4 and 8-Gly-|-Ser-9 bonds in insulin B chain.. In terms of biological role, secreted metalloproteinase that allows assimilation of proteinaceous substrates. Shows high activities on basic nuclear substrates such as histone and protamine. The chain is Neutral protease 2 homolog MGG_10927 from Colletotrichum graminicola (strain M1.001 / M2 / FGSC 10212) (Maize anthracnose fungus).